The following is a 93-amino-acid chain: Small ribosomal subunit protein bS20c (93 aa).

This sequence belongs to the bacterial ribosomal protein bS20 family.

Its subcellular location is the plastid. It is found in the chloroplast. Its function is as follows. Binds directly to 16S ribosomal RNA. The polypeptide is Small ribosomal subunit protein bS20c (Thalassiosira pseudonana (Marine diatom)).